The sequence spans 599 residues: Phosphomethylpyrimidine synthase (599 aa).

The segment covering 1-16 has biased composition (polar residues); it reads MSAASANSVTNPSAWE. 2 disordered regions span residues 1-53 and 82-108; these read MSAA…PNDP and EDTE…GAAS. Over residues 87–100 the composition is skewed to basic and acidic residues; sequence YAGRERNLADDGRS. Substrate-binding positions include Asn-192, Met-221, Tyr-250, His-286, 306–308, 347–350, and Glu-386; these read SRG and DGLR. Position 390 (His-390) interacts with Zn(2+). Tyr-413 is a substrate binding site. Residue His-454 participates in Zn(2+) binding. Positions 534, 537, and 542 each coordinate [4Fe-4S] cluster.

Belongs to the ThiC family. [4Fe-4S] cluster is required as a cofactor.

It catalyses the reaction 5-amino-1-(5-phospho-beta-D-ribosyl)imidazole + S-adenosyl-L-methionine = 4-amino-2-methyl-5-(phosphooxymethyl)pyrimidine + CO + 5'-deoxyadenosine + formate + L-methionine + 3 H(+). The protein operates within cofactor biosynthesis; thiamine diphosphate biosynthesis. Functionally, catalyzes the synthesis of the hydroxymethylpyrimidine phosphate (HMP-P) moiety of thiamine from aminoimidazole ribotide (AIR) in a radical S-adenosyl-L-methionine (SAM)-dependent reaction. This chain is Phosphomethylpyrimidine synthase, found in Corynebacterium diphtheriae (strain ATCC 700971 / NCTC 13129 / Biotype gravis).